The chain runs to 221 residues: 7-cyano-7-deazaguanine synthase (221 aa).

8 to 18 (MSGGMDSTLCA) is a binding site for ATP. Zn(2+)-binding residues include C187, C195, C198, and C201.

This sequence belongs to the QueC family. Zn(2+) is required as a cofactor.

It carries out the reaction 7-carboxy-7-deazaguanine + NH4(+) + ATP = 7-cyano-7-deazaguanine + ADP + phosphate + H2O + H(+). The protein operates within purine metabolism; 7-cyano-7-deazaguanine biosynthesis. Its function is as follows. Catalyzes the ATP-dependent conversion of 7-carboxy-7-deazaguanine (CDG) to 7-cyano-7-deazaguanine (preQ(0)). This is 7-cyano-7-deazaguanine synthase from Campylobacter concisus (strain 13826).